The chain runs to 419 residues: MSEEFKSLLSSDIIPENWYNVTPDLPEPLPPPRDTKSDFSSINLLNKILPKEVLKQEFTFKRYEKIPDEIIDKYIQIGRPTPLIRAKNLEKYLDYGGKIFFKFEGATATGSHKINTAIAQAYYAMNENANGVTTETGAGQWGSATALAASLYNLKSQIFMVRVSYEQKPLRKVVMSLYNSSVVPSPSNLTEFGRKILSENPDHPGTLGIGISEAVEYALDHNYRYMVASVMNAALTHQSVIGQESIKQMELLGEFPDVLFGCVGGGSNFGGFAFPFLPINDDIEIYATTAQEVPKFSQGEYKYDLMDTAGVLPAVRMYSLGADFVPPKIYAGGLRYHGAAPSLSLLINHGRIKSDEVTEEQVKNAIKTFANTQGFIIAPESGHAVATAIKYAREHKDEKKTLLINVSGHGLLDLSIFSD.

The residue at position 113 (Lys113) is an N6-(pyridoxal phosphate)lysine.

The protein belongs to the TrpB family. As to quaternary structure, tetramer of two alpha and two beta chains. Pyridoxal 5'-phosphate is required as a cofactor.

The enzyme catalyses (1S,2R)-1-C-(indol-3-yl)glycerol 3-phosphate + L-serine = D-glyceraldehyde 3-phosphate + L-tryptophan + H2O. Its pathway is amino-acid biosynthesis; L-tryptophan biosynthesis; L-tryptophan from chorismate: step 5/5. The beta subunit is responsible for the synthesis of L-tryptophan from indole and L-serine. The chain is Tryptophan synthase beta chain from Picrophilus torridus (strain ATCC 700027 / DSM 9790 / JCM 10055 / NBRC 100828 / KAW 2/3).